The sequence spans 83 residues: MIIPWQELEAETLDNIVESVILREGTDYGIEELSLNQKKQLLLTQIRNGIALIVWSELHESIDIKNKTEFLKQECKEQECQMN.

This sequence belongs to the UPF0270 family.

The polypeptide is UPF0270 protein CGSHiEE_07180 (Haemophilus influenzae (strain PittEE)).